Here is a 170-residue protein sequence, read N- to C-terminus: 3-isopropylmalate dehydratase small subunit 1 (170 aa).

It belongs to the LeuD family. LeuD type 2 subfamily. As to quaternary structure, heterodimer of LeuC and LeuD.

The catalysed reaction is (2R,3S)-3-isopropylmalate = (2S)-2-isopropylmalate. It functions in the pathway amino-acid biosynthesis; L-leucine biosynthesis; L-leucine from 3-methyl-2-oxobutanoate: step 2/4. Catalyzes the isomerization between 2-isopropylmalate and 3-isopropylmalate, via the formation of 2-isopropylmaleate. This chain is 3-isopropylmalate dehydratase small subunit 1 (leuD1), found in Methanopyrus kandleri (strain AV19 / DSM 6324 / JCM 9639 / NBRC 100938).